The sequence spans 154 residues: NADPH-dependent 7-cyano-7-deazaguanine reductase (154 aa).

A compositionally biased stretch (polar residues) spans 1–13 (MSVTDVSGLSQLG). Positions 1–30 (MSVTDVSGLSQLGTKVDTPESPEKAVLEKV) are disordered. A compositionally biased stretch (basic and acidic residues) spans 17-27 (DTPESPEKAVL). Residue Cys52 is the Thioimide intermediate of the active site. Asp59 serves as the catalytic Proton donor. Substrate is bound by residues 74–76 (VES) and 93–94 (HE).

This sequence belongs to the GTP cyclohydrolase I family. QueF type 1 subfamily.

The protein resides in the cytoplasm. It catalyses the reaction 7-aminomethyl-7-carbaguanine + 2 NADP(+) = 7-cyano-7-deazaguanine + 2 NADPH + 3 H(+). The protein operates within tRNA modification; tRNA-queuosine biosynthesis. In terms of biological role, catalyzes the NADPH-dependent reduction of 7-cyano-7-deazaguanine (preQ0) to 7-aminomethyl-7-deazaguanine (preQ1). This Agrobacterium fabrum (strain C58 / ATCC 33970) (Agrobacterium tumefaciens (strain C58)) protein is NADPH-dependent 7-cyano-7-deazaguanine reductase.